The primary structure comprises 676 residues: A-type ATP synthase subunit I (676 aa).

A run of 8 helical transmembrane segments spans residues 341 to 361 (VFIAIFFPIFFGMMLGDIGYG), 390 to 410 (AGVMSIIFGFIYGECFGPFIV), 449 to 469 (ILLFATIVIGIAKILFGFALG), 490 to 510 (IIGVLGLAMIIFGFAYNVGVF), 538 to 558 (LNVYYLAALPLLVVWFILFVM), 564 to 584 (MGAMGVILAVELLTWFGQIMS), 590 to 610 (AIGLSSVYIAFVINFIGMKLI), and 617 to 637 (IPIVGAIVLLIGHVGNLILGI).

The protein belongs to the V-ATPase 116 kDa subunit family. In terms of assembly, has multiple subunits with at least A(3), B(3), C, D, E, F, H, I and proteolipid K(x).

Its subcellular location is the cell membrane. Component of the A-type ATP synthase that produces ATP from ADP in the presence of a proton gradient across the membrane. The protein is A-type ATP synthase subunit I of Archaeoglobus fulgidus (strain ATCC 49558 / DSM 4304 / JCM 9628 / NBRC 100126 / VC-16).